A 1116-amino-acid polypeptide reads, in one-letter code: Large proline-rich protein bag6-B (1116 aa).

A Ubiquitin-like domain is found at 7 to 82 (MDVTVKTLDS…HLVERAPPQT (76 aa)). 7 disordered regions span residues 76–114 (ERAPPQTQTSTSGPSTSSSTSPSSSNAAPVPGAPERNGN), 170–221 (EGQP…PSEY), 329–385 (STTG…HPHP), 473–502 (PAAPSFNFQPGAAATTPPAPGGATTTAPGA), 533–589 (GGSS…GTDQ), 640–678 (VPVSTSPPQSASQAPPPPSSPAPPAHSAPPPAAAPESLP), and 1058–1080 (TGAKPESSTECVKRELDNSEAQG). Low complexity predominate over residues 79 to 100 (PPQTQTSTSGPSTSSSTSPSSS). Residues 194–207 (RETLPQTTQNADGQ) are compositionally biased toward polar residues. A compositionally biased stretch (low complexity) spans 208–219 (SNSTPTSHPSPS). Positions 344–353 (GNATPSTNTS) are enriched in polar residues. Composition is skewed to low complexity over residues 482–502 (PGAAATTPPAPGGATTTAPGA), 535–580 (SSTS…SVPS), and 641–652 (PVSTSPPQSASQ). Residues 653–672 (APPPPSSPAPPAHSAPPPAA) are compositionally biased toward pro residues. Residues 1068–1080 (CVKRELDNSEAQG) show a composition bias toward basic and acidic residues.

Component of the bag6/bat3 complex.

It is found in the cytoplasm. The protein resides in the cytosol. The protein localises to the nucleus. Its subcellular location is the secreted. It localises to the extracellular exosome. In terms of biological role, ATP-independent molecular chaperone preventing the aggregation of misfolded and hydrophobic patches-containing proteins. Functions as part of a cytosolic protein quality control complex, the bag6/bat3 complex, which maintains these client proteins in a soluble state and participates in their proper delivery to the endoplasmic reticulum or alternatively can promote their sorting to the proteasome where they undergo degradation. The bag6/bat3 complex is involved in the post-translational delivery of tail-anchored/type II transmembrane proteins to the endoplasmic reticulum membrane. Similarly, the bag6/bat3 complex also functions as a sorting platform for proteins of the secretory pathway that are mislocalized to the cytosol either delivering them to the proteasome for degradation or to the endoplasmic reticulum. The bag6/bat3 complex also plays a role in the endoplasmic reticulum-associated degradation (ERAD), a quality control mechanism that eliminates unwanted proteins of the endoplasmic reticulum through their retrotranslocation to the cytosol and their targeting to the proteasome. It maintains these retrotranslocated proteins in an unfolded yet soluble state condition in the cytosol to ensure their proper delivery to the proteasome. Also required for selective ubiquitin-mediated degradation of defective nascent chain polypeptides by the proteasome. Also involved in endoplasmic reticulum stress-induced pre-emptive quality control, a mechanism that selectively attenuates the translocation of newly synthesized proteins into the endoplasmic reticulum and reroutes them to the cytosol for proteasomal degradation. May ensure the proper degradation of these proteins and thereby protects the endoplasmic reticulum from protein overload upon stress. By stabilizing a large spectrum of proteins, may indirectly affect different biological processes including apoptosis. By controlling the steady-state expression of the IGF1R receptor, indirectly regulates the insulin-like growth factor receptor signaling pathway. When nuclear, may also act as a component of some chromatin regulator complex. The chain is Large proline-rich protein bag6-B from Xenopus laevis (African clawed frog).